The chain runs to 997 residues: Phosphoenolpyruvate carboxylase (997 aa).

Residues 1–67 (MKSSGSARTA…KPAARTREDK (67 aa)) form a disordered region. Residues histidine 207 and lysine 649 contribute to the active site.

Belongs to the PEPCase type 1 family. It depends on Mg(2+) as a cofactor.

It carries out the reaction oxaloacetate + phosphate = phosphoenolpyruvate + hydrogencarbonate. In terms of biological role, forms oxaloacetate, a four-carbon dicarboxylic acid source for the tricarboxylic acid cycle. This Burkholderia vietnamiensis (strain G4 / LMG 22486) (Burkholderia cepacia (strain R1808)) protein is Phosphoenolpyruvate carboxylase.